A 364-amino-acid polypeptide reads, in one-letter code: Transcription factor TGA4 (364 aa).

Positions 39–79 (PGSIIIPTNEKPDSLSEDTSHGTEGTPHKFDQEASTSRHPD) are disordered. Positions 48–79 (EKPDSLSEDTSHGTEGTPHKFDQEASTSRHPD) are enriched in basic and acidic residues. Residues 78 to 141 (PDKIQRRLAQ…NGVDTNALSF (64 aa)) enclose the bZIP domain. Coiled coils occupy residues 79–127 (DKIQ…RQQG) and 257–277 (NLRQ…EKLQ). Residues 80–100 (KIQRRLAQNREAARKSRLRKK) form a basic motif region. Positions 106–120 (LETSRLKLIHLEQEL) are leucine-zipper. Residues 149–359 (IVAFEMEYGH…RALSSSWAAR (211 aa)) form the DOG1 domain. Cys256 and Cys262 are oxidised to a cystine.

This sequence belongs to the bZIP family. Binds DNA as a dimer. Interaction with the Dof domain proteins OBP1, OBP2 or OBP3 enhances the binding to the ocs element. Interacts with RAP2-3/EPB, an ethylene-responsive element binding protein. The reduced form interacts with NPR1. As to expression, predominantly expressed in roots.

The protein resides in the nucleus. Functionally, transcriptional activator that binds specifically to the DNA sequence 5'-TGACG-3'. Recognizes ocs elements like the as-1 motif of the cauliflower mosaic virus 35S promoter. Binding to the as-1-like cis elements mediate auxin- and salicylic acid-inducible transcription. May be involved in the induction of the systemic acquired resistance (SAR) via its interaction with NPR1. Could also bind to the Hex-motif (5'-TGACGTGG-3') another cis-acting element found in plant histone promoters. This is Transcription factor TGA4 (TGA4) from Arabidopsis thaliana (Mouse-ear cress).